We begin with the raw amino-acid sequence, 525 residues long: MSDIHEHKILILDFGSQYTQLIARRIREIGVYCELWAWDVTEAQIREFAPNGIILAGGPESVTADNSPRAPEYVFNAGVPVLGICYGMQTMSEQLGGKVIQGVGEGEFGYAQIEMLAQSALFKDIEDAVNSDGKSLLDVWMSHGDKVSAIPEGFVAVAKTDTCPFAAMSCEEKRFYGVQFHPEVTHTRQGMRMLSHFALDICGCAANWKPSSIIEDAIERLKKQVGDDEVILGLSGGVDSSVVAMLLHRAIGKKLTCVFVDNGLLRLNEAKQVMEMFGDHFGLNIVHIDAENRFLDALKGEADPEAKRKIIGRVFVEIFDEEAKKCVNAKWLAQGTIYPDVIESAGSATGKAHVIKSHHNVGGLPDDMELGLVEPLRELFKDEVRKIGLELGLPYNMLYRHPFPGPGLGVRVLGEVKKEYCDLLRRADAIFIEELHKADLYNKVSQAFTVFLPVRSVGVMGDGRKYDWVVSLRAVETIDFMTAHWAHLPYDFLGRVSNRIINEIDGISRVVYDISGKPPATIEWE.

A Glutamine amidotransferase type-1 domain is found at 8–207; the sequence is KILILDFGSQ…ALDICGCAAN (200 aa). The active-site Nucleophile is C85. Catalysis depends on residues H181 and E183. One can recognise a GMPS ATP-PPase domain in the interval 208–400; it reads WKPSSIIEDA…LGLPYNMLYR (193 aa). 235-241 contacts ATP; the sequence is SGGVDSS.

Homodimer.

It catalyses the reaction XMP + L-glutamine + ATP + H2O = GMP + L-glutamate + AMP + diphosphate + 2 H(+). It functions in the pathway purine metabolism; GMP biosynthesis; GMP from XMP (L-Gln route): step 1/1. Functionally, catalyzes the synthesis of GMP from XMP. This chain is GMP synthase [glutamine-hydrolyzing], found in Shewanella sp. (strain MR-7).